Consider the following 176-residue polypeptide: Protein singles bar (176 aa).

The next 4 helical transmembrane spans lie at 13–35 (LGIR…LSRI), 71–91 (FLAT…CYAF), 111–131 (LASC…VVWL), and 140–160 (GFWA…AGIL). Residues 30–173 (FVLSRIGLLK…DAYLAFRHFR (144 aa)) enclose the MARVEL domain.

The protein resides in the membrane. Its function is as follows. Essential for myoblast fusion in developing embryos and pupae, and consequently is essential for muscle formation in adults. Required for progression past the pre-fusion complex stage of myoblast fusion. The polypeptide is Protein singles bar (Drosophila melanogaster (Fruit fly)).